A 480-amino-acid chain; its full sequence is Cysteine--tRNA ligase (480 aa).

A Zn(2+)-binding site is contributed by cysteine 27. A 'HIGH' region motif is present at residues proline 29–asparagine 39. Residues cysteine 221, histidine 246, and glutamate 250 each coordinate Zn(2+). Residues lysine 278–serine 282 carry the 'KMSKS' region motif. Lysine 281 provides a ligand contact to ATP.

Belongs to the class-I aminoacyl-tRNA synthetase family. As to quaternary structure, monomer. Zn(2+) is required as a cofactor.

The protein localises to the cytoplasm. The catalysed reaction is tRNA(Cys) + L-cysteine + ATP = L-cysteinyl-tRNA(Cys) + AMP + diphosphate. The sequence is that of Cysteine--tRNA ligase from Borreliella afzelii (strain PKo) (Borrelia afzelii).